Here is a 727-residue protein sequence, read N- to C-terminus: Engulfment and cell motility protein 1 (727 aa).

Phosphotyrosine; by HCK is present on Tyr18. N6-acetyllysine is present on residues Lys100 and Lys105. Residue Tyr216 is modified to Phosphotyrosine; by HCK. One can recognise an ELMO domain in the interval 319–492; it reads AQRDIIFELR…VVKEQVMRAL (174 aa). Position 344 is a phosphoserine (Ser344). A phosphotyrosine; by HCK mark is found at Tyr395 and Tyr511. A PH domain is found at 555-676; that stretch reads RLVEGTCFRK…DGLNALLGKD (122 aa). The SH3-binding signature appears at 707–714; it reads PDAPPPIP. Tyr720 is modified (phosphotyrosine; by HCK).

As to quaternary structure, interacts directly with the SH3-domain of DOCK1 via its SH3-binding site. Probably forms a heterotrimeric complex with DOCK1 and RAC1. Interacts with PLEKHG6. Interacts with HCK (via SH3 domain). Interacts with ADGRB1. Interacts with ADGRB3. Interacts with DOCK5. Phosphorylated by HCK.

It is found in the cytoplasm. It localises to the cell membrane. Involved in cytoskeletal rearrangements required for phagocytosis of apoptotic cells and cell motility. Acts in association with DOCK1 and CRK. Was initially proposed to be required in complex with DOCK1 to activate Rac Rho small GTPases. May enhance the guanine nucleotide exchange factor (GEF) activity of DOCK1. This Mus musculus (Mouse) protein is Engulfment and cell motility protein 1 (Elmo1).